The chain runs to 70 residues: ATP synthase subunit c (70 aa).

Transmembrane regions (helical) follow at residues 4–24 and 47–67; these read IAAG…DGIV and FIGV…SLLV.

This sequence belongs to the ATPase C chain family. As to quaternary structure, F-type ATPases have 2 components, F(1) - the catalytic core - and F(0) - the membrane proton channel. F(1) has five subunits: alpha(3), beta(3), gamma(1), delta(1), epsilon(1). F(0) has three main subunits: a(1), b(2) and c(10-14). The alpha and beta chains form an alternating ring which encloses part of the gamma chain. F(1) is attached to F(0) by a central stalk formed by the gamma and epsilon chains, while a peripheral stalk is formed by the delta and b chains.

It localises to the cell membrane. Its function is as follows. F(1)F(0) ATP synthase produces ATP from ADP in the presence of a proton or sodium gradient. F-type ATPases consist of two structural domains, F(1) containing the extramembraneous catalytic core and F(0) containing the membrane proton channel, linked together by a central stalk and a peripheral stalk. During catalysis, ATP synthesis in the catalytic domain of F(1) is coupled via a rotary mechanism of the central stalk subunits to proton translocation. Functionally, key component of the F(0) channel; it plays a direct role in translocation across the membrane. A homomeric c-ring of between 10-14 subunits forms the central stalk rotor element with the F(1) delta and epsilon subunits. This Pediococcus pentosaceus (strain ATCC 25745 / CCUG 21536 / LMG 10740 / 183-1w) protein is ATP synthase subunit c.